A 282-amino-acid polypeptide reads, in one-letter code: Diaminopimelate epimerase (282 aa).

Residues asparagine 13, glutamine 45, and asparagine 64 each contribute to the substrate site. Catalysis depends on cysteine 73, which acts as the Proton donor. Residues 74 to 75 (GN), asparagine 155, asparagine 189, and 207 to 208 (ER) each bind substrate. The active-site Proton acceptor is cysteine 216. Residue 217-218 (GS) participates in substrate binding.

This sequence belongs to the diaminopimelate epimerase family. Homodimer.

The protein resides in the cytoplasm. It carries out the reaction (2S,6S)-2,6-diaminopimelate = meso-2,6-diaminopimelate. It participates in amino-acid biosynthesis; L-lysine biosynthesis via DAP pathway; DL-2,6-diaminopimelate from LL-2,6-diaminopimelate: step 1/1. Its function is as follows. Catalyzes the stereoinversion of LL-2,6-diaminopimelate (L,L-DAP) to meso-diaminopimelate (meso-DAP), a precursor of L-lysine and an essential component of the bacterial peptidoglycan. In Bartonella bacilliformis (strain ATCC 35685 / KC583 / Herrer 020/F12,63), this protein is Diaminopimelate epimerase.